A 110-amino-acid polypeptide reads, in one-letter code: Hydrogenase maturation factor HypA (110 aa).

A Ni(2+)-binding site is contributed by His-2. Residues Cys-70, Cys-73, Cys-86, and Cys-89 each contribute to the Zn(2+) site.

This sequence belongs to the HypA/HybF family.

Its function is as follows. Involved in the maturation of [NiFe] hydrogenases. Required for nickel insertion into the metal center of the hydrogenase. This is Hydrogenase maturation factor HypA from Geobacter metallireducens (strain ATCC 53774 / DSM 7210 / GS-15).